Reading from the N-terminus, the 344-residue chain is Succinylglutamate desuccinylase (344 aa).

The Zn(2+) site is built by H63, E66, and H160. The active site involves E224.

It belongs to the AspA/AstE family. Succinylglutamate desuccinylase subfamily. It depends on Zn(2+) as a cofactor.

The enzyme catalyses N-succinyl-L-glutamate + H2O = L-glutamate + succinate. It participates in amino-acid degradation; L-arginine degradation via AST pathway; L-glutamate and succinate from L-arginine: step 5/5. Functionally, transforms N(2)-succinylglutamate into succinate and glutamate. The sequence is that of Succinylglutamate desuccinylase from Shewanella sp. (strain W3-18-1).